We begin with the raw amino-acid sequence, 283 residues long: Shikimate dehydrogenase (NADP(+)) (283 aa).

Shikimate contacts are provided by residues 19–21 and threonine 66; that span reads SLS. Lysine 70 serves as the catalytic Proton acceptor. Residues asparagine 91 and aspartate 106 each coordinate shikimate. NADP(+) contacts are provided by residues 129 to 133, 153 to 158, and leucine 224; these read GAGGA and NRTPEK. Tyrosine 226 contacts shikimate. Residue glycine 247 coordinates NADP(+).

The protein belongs to the shikimate dehydrogenase family. In terms of assembly, homodimer.

The enzyme catalyses shikimate + NADP(+) = 3-dehydroshikimate + NADPH + H(+). Its pathway is metabolic intermediate biosynthesis; chorismate biosynthesis; chorismate from D-erythrose 4-phosphate and phosphoenolpyruvate: step 4/7. Its function is as follows. Involved in the biosynthesis of the chorismate, which leads to the biosynthesis of aromatic amino acids. Catalyzes the reversible NADPH linked reduction of 3-dehydroshikimate (DHSA) to yield shikimate (SA). The protein is Shikimate dehydrogenase (NADP(+)) of Methanothermobacter thermautotrophicus (strain ATCC 29096 / DSM 1053 / JCM 10044 / NBRC 100330 / Delta H) (Methanobacterium thermoautotrophicum).